Here is a 215-residue protein sequence, read N- to C-terminus: Orotate phosphoribosyltransferase (215 aa).

K26 contributes to the 5-phospho-alpha-D-ribose 1-diphosphate binding site. Orotate is bound at residue 34–35 (FF). Residues 72–73 (YK), R99, K100, K103, H105, and 124–132 (DDVITAGTA) contribute to the 5-phospho-alpha-D-ribose 1-diphosphate site. Orotate contacts are provided by T128 and R156.

The protein belongs to the purine/pyrimidine phosphoribosyltransferase family. PyrE subfamily. Homodimer. Mg(2+) serves as cofactor.

It catalyses the reaction orotidine 5'-phosphate + diphosphate = orotate + 5-phospho-alpha-D-ribose 1-diphosphate. The protein operates within pyrimidine metabolism; UMP biosynthesis via de novo pathway; UMP from orotate: step 1/2. Catalyzes the transfer of a ribosyl phosphate group from 5-phosphoribose 1-diphosphate to orotate, leading to the formation of orotidine monophosphate (OMP). The protein is Orotate phosphoribosyltransferase of Stutzerimonas stutzeri (strain A1501) (Pseudomonas stutzeri).